The following is a 698-amino-acid chain: Inner centromere protein SLI15 (698 aa).

Position 268 is a phosphoserine (serine 268). 3 disordered regions span residues lysine 365–threonine 390, glutamate 405–asparagine 444, and arginine 455–threonine 474. 2 stretches are compositionally biased toward polar residues: residues arginine 422–serine 439 and alanine 459–threonine 474. Phosphoserine is present on serine 489. The disordered stretch occupies residues isoleucine 535–leucine 560. The span at glutamine 550–leucine 560 shows a compositional bias: basic and acidic residues.

The protein belongs to the INCENP family. In terms of assembly, component of the CPC complex at least composed of IPL1, BIR1 and SLI15. In terms of processing, phosphorylated by serine/threonine protein kinase IPL1.

Its subcellular location is the nucleus. The protein resides in the cytoplasm. The protein localises to the cytoskeleton. It localises to the spindle. It is found in the chromosome. Its subcellular location is the centromere. The protein resides in the kinetochore. Its function is as follows. Component of the chromosomal passenger complex (CPC), a complex that acts as a key regulator of mitosis. Stimulates IPL1 kinase activity and facilitates its association with the mitotic spindle. Has a role in attaching the kinetochores to the microtubules and ensuring that sister kinetochores connect to opposite poles. The sequence is that of Inner centromere protein SLI15 (SLI15) from Saccharomyces cerevisiae (strain ATCC 204508 / S288c) (Baker's yeast).